We begin with the raw amino-acid sequence, 920 residues long: Isoleucine--tRNA ligase (920 aa).

The 'HIGH' region signature appears at 58-68; the sequence is PYANGHLHLGH. Glutamate 569 contributes to the L-isoleucyl-5'-AMP binding site. Residues 610–614 carry the 'KMSKS' region motif; the sequence is KMSKS. Lysine 613 is an ATP binding site. The Zn(2+) site is built by cysteine 895, cysteine 898, cysteine 910, and cysteine 913.

The protein belongs to the class-I aminoacyl-tRNA synthetase family. IleS type 1 subfamily. In terms of assembly, monomer. Zn(2+) is required as a cofactor.

The protein resides in the cytoplasm. The enzyme catalyses tRNA(Ile) + L-isoleucine + ATP = L-isoleucyl-tRNA(Ile) + AMP + diphosphate. Its function is as follows. Catalyzes the attachment of isoleucine to tRNA(Ile). As IleRS can inadvertently accommodate and process structurally similar amino acids such as valine, to avoid such errors it has two additional distinct tRNA(Ile)-dependent editing activities. One activity is designated as 'pretransfer' editing and involves the hydrolysis of activated Val-AMP. The other activity is designated 'posttransfer' editing and involves deacylation of mischarged Val-tRNA(Ile). The sequence is that of Isoleucine--tRNA ligase from Helicobacter pylori (strain J99 / ATCC 700824) (Campylobacter pylori J99).